The following is a 106-amino-acid chain: UPF0145 protein Pfl01_1745 (106 aa).

The protein belongs to the UPF0145 family.

This is UPF0145 protein Pfl01_1745 from Pseudomonas fluorescens (strain Pf0-1).